A 388-amino-acid polypeptide reads, in one-letter code: Chorismate synthase (388 aa).

Positions 39 and 45 each coordinate NADP(+). Residues 95 to 115 (EKQKKIRRVSKPRPGHADLVG) are disordered. Basic residues predominate over residues 98–108 (KKIRRVSKPRP). Residues 130-132 (RSS), 251-252 (NA), G296, 311-315 (KPIPT), and R337 contribute to the FMN site.

The protein belongs to the chorismate synthase family. Homotetramer. FMNH2 serves as cofactor.

The catalysed reaction is 5-O-(1-carboxyvinyl)-3-phosphoshikimate = chorismate + phosphate. Its pathway is metabolic intermediate biosynthesis; chorismate biosynthesis; chorismate from D-erythrose 4-phosphate and phosphoenolpyruvate: step 7/7. Functionally, catalyzes the anti-1,4-elimination of the C-3 phosphate and the C-6 proR hydrogen from 5-enolpyruvylshikimate-3-phosphate (EPSP) to yield chorismate, which is the branch point compound that serves as the starting substrate for the three terminal pathways of aromatic amino acid biosynthesis. This reaction introduces a second double bond into the aromatic ring system. The chain is Chorismate synthase from Enterococcus faecalis (strain ATCC 700802 / V583).